Here is a 494-residue protein sequence, read N- to C-terminus: Glycerol kinase (494 aa).

Threonine 13 is an ADP binding site. 3 residues coordinate ATP: threonine 13, threonine 14, and serine 15. Sn-glycerol 3-phosphate is bound at residue threonine 13. Arginine 17 contacts ADP. Positions 83, 84, 135, and 244 each coordinate sn-glycerol 3-phosphate. Residues arginine 83, glutamate 84, tyrosine 135, aspartate 244, and glutamine 245 each coordinate glycerol. ADP is bound by residues threonine 266 and glycine 309. Residues threonine 266, glycine 309, glutamine 313, and glycine 410 each contribute to the ATP site. 2 residues coordinate ADP: glycine 410 and asparagine 414.

It belongs to the FGGY kinase family.

The catalysed reaction is glycerol + ATP = sn-glycerol 3-phosphate + ADP + H(+). It functions in the pathway polyol metabolism; glycerol degradation via glycerol kinase pathway; sn-glycerol 3-phosphate from glycerol: step 1/1. With respect to regulation, inhibited by fructose 1,6-bisphosphate (FBP). Functionally, key enzyme in the regulation of glycerol uptake and metabolism. Catalyzes the phosphorylation of glycerol to yield sn-glycerol 3-phosphate. The sequence is that of Glycerol kinase from Shewanella sp. (strain ANA-3).